The following is a 711-amino-acid chain: Denticleless protein homolog B (711 aa).

WD repeat units lie at residues 47 to 89 (GRAV…MQRL), 96 to 135 (AHTNAVFDIAWVPGEHKLVTASGDQTAKLWDVKAGELIGE), and 138 to 178 (GHQC…KDGF). A DDB1-binding motif motif is present at residues 168 to 171 (WDTR). The short motif at 197–204 (PSKVKKRK) is the Nuclear localization signal element. WD repeat units follow at residues 215-254 (DSQQSVTVVIFQDEYTVISAGAVDGVVKIWDLRKNYSTYR), 270-309 (TRKLGYSSLVLDPTGTNLFASCTDDNVYMFNATGLKTDPV), 314-355 (GHQN…AAPI), and 359-398 (GHCQEVTSVAWCQSDFTKIATCSDDNTVRIWRLNRSSEDS). Positions 244–247 (WDLR) match the DDB1-binding motif motif. 2 disordered regions span residues 473–524 (QTPK…AFTP) and 601–698 (EFDQ…TPGS). Polar residues-rich tracts occupy residues 504-516 (TPKSSKGTDSKTP) and 606-627 (LSPSPSTSLHMNATDNPPTLSP). A compositionally biased stretch (basic and acidic residues) spans 631-642 (MKSDFVDKENSS). Residues 658–675 (DNSSPQFKSSSSPSSRNS) are compositionally biased toward low complexity. The span at 684–697 (NAPNSPVSVPTTPG) shows a compositional bias: polar residues.

This sequence belongs to the WD repeat cdt2 family. In terms of assembly, component of the DCX(DTL) E3 ubiquitin ligase complex, at least composed of cul4 (cul4a or cul4b), ddb1, dtl/cdt2 and rbx1.

Its subcellular location is the nucleus. The protein resides in the cytoplasm. It localises to the cytoskeleton. The protein localises to the microtubule organizing center. It is found in the centrosome. Its subcellular location is the chromosome. It functions in the pathway protein modification; protein ubiquitination. Substrate-specific adapter of a DCX (DDB1-CUL4-X-box) E3 ubiquitin-protein ligase complex required for cell cycle control, DNA damage response and translesion DNA synthesis. The DCX(DTL) complex, also named CRL4(CDT2) complex, mediates the polyubiquitination and subsequent degradation of CDT1, CDKN1A/p21(CIP1), KMT5A and SDE2. CDT1 degradation in response to DNA damage is necessary to ensure proper cell cycle regulation of DNA replication. CDKN1A/p21(CIP1) degradation during S phase or following UV irradiation is essential to control replication licensing. KMT5A degradation is also important for a proper regulation of mechanisms such as TGF-beta signaling, cell cycle progression, DNA repair and cell migration. Most substrates require their interaction with PCNA for their polyubiquitination: substrates interact with PCNA via their PIP-box, and those containing the 'K+4' motif in the PIP box, recruit the DCX(DTL) complex, leading to their degradation. In undamaged proliferating cells, the DCX(DTL) complex also promotes the 'Lys-164' monoubiquitination of PCNA, thereby being involved in PCNA-dependent translesion DNA synthesis. May play a role in the regulation of the circadian clock. The polypeptide is Denticleless protein homolog B (dtl-b) (Xenopus laevis (African clawed frog)).